Consider the following 230-residue polypeptide: Leucyl/phenylalanyl-tRNA--protein transferase (230 aa).

This sequence belongs to the L/F-transferase family.

Its subcellular location is the cytoplasm. It carries out the reaction N-terminal L-lysyl-[protein] + L-leucyl-tRNA(Leu) = N-terminal L-leucyl-L-lysyl-[protein] + tRNA(Leu) + H(+). It catalyses the reaction N-terminal L-arginyl-[protein] + L-leucyl-tRNA(Leu) = N-terminal L-leucyl-L-arginyl-[protein] + tRNA(Leu) + H(+). The enzyme catalyses L-phenylalanyl-tRNA(Phe) + an N-terminal L-alpha-aminoacyl-[protein] = an N-terminal L-phenylalanyl-L-alpha-aminoacyl-[protein] + tRNA(Phe). In terms of biological role, functions in the N-end rule pathway of protein degradation where it conjugates Leu, Phe and, less efficiently, Met from aminoacyl-tRNAs to the N-termini of proteins containing an N-terminal arginine or lysine. This is Leucyl/phenylalanyl-tRNA--protein transferase from Hamiltonella defensa subsp. Acyrthosiphon pisum (strain 5AT).